Here is a 317-residue protein sequence, read N- to C-terminus: Iron-uptake system-binding protein (317 aa).

The first 19 residues, 1 to 19, serve as a signal peptide directing secretion; it reads MKKISLTLLILLLALTAAA. A lipid anchor (N-palmitoyl cysteine) is attached at C20. Residue C20 is the site of S-diacylglycerol cysteine attachment. A Fe/B12 periplasmic-binding domain is found at 57-317; that stretch reads IAITGSVESM…KAAAEKLTQN (261 aa).

The protein belongs to the bacterial solute-binding protein 8 family. The complex is composed of one ATP-binding protein (YusV), two transmembrane proteins (FeuB and FeuC) and a solute-binding protein (FeuA).

It localises to the cell membrane. The protein localises to the cytoplasm. The protein resides in the membrane raft. Functionally, involved in the uptake of iron. In terms of biological role, part of the ABC transporter complex FeuABC/YusV involved in import of the catecholate siderophores bacillibactin and enterobactin. In Bacillus subtilis (strain 168), this protein is Iron-uptake system-binding protein (feuA).